The sequence spans 344 residues: Ferrochelatase (344 aa).

Fe cation-binding residues include histidine 214 and glutamate 295.

Belongs to the ferrochelatase family.

Its subcellular location is the cytoplasm. It catalyses the reaction heme b + 2 H(+) = protoporphyrin IX + Fe(2+). Its pathway is porphyrin-containing compound metabolism; protoheme biosynthesis; protoheme from protoporphyrin-IX: step 1/1. Its function is as follows. Catalyzes the ferrous insertion into protoporphyrin IX. This Rhizobium johnstonii (strain DSM 114642 / LMG 32736 / 3841) (Rhizobium leguminosarum bv. viciae) protein is Ferrochelatase.